A 221-amino-acid chain; its full sequence is PKHD-type hydroxylase P9211_12561 (221 aa).

The region spanning 80 to 174 (KVHGTMFTRS…RIVCVGWIQS (95 aa)) is the Fe2OG dioxygenase domain. Positions 98, 100, and 155 each coordinate Fe cation. Arg165 serves as a coordination point for 2-oxoglutarate.

It depends on Fe(2+) as a cofactor. Requires L-ascorbate as cofactor.

The chain is PKHD-type hydroxylase P9211_12561 from Prochlorococcus marinus (strain MIT 9211).